A 307-amino-acid chain; its full sequence is UDP-N-acetylenolpyruvoylglucosamine reductase (307 aa).

Residues 33-198 (KVGGPADIFV…LNATFALQKG (166 aa)) form the FAD-binding PCMH-type domain. R177 is an active-site residue. The active-site Proton donor is S227. Residue E297 is part of the active site.

The protein belongs to the MurB family. The cofactor is FAD.

It localises to the cytoplasm. It catalyses the reaction UDP-N-acetyl-alpha-D-muramate + NADP(+) = UDP-N-acetyl-3-O-(1-carboxyvinyl)-alpha-D-glucosamine + NADPH + H(+). It participates in cell wall biogenesis; peptidoglycan biosynthesis. In terms of biological role, cell wall formation. The protein is UDP-N-acetylenolpyruvoylglucosamine reductase of Clostridium novyi (strain NT).